Here is an 86-residue protein sequence, read N- to C-terminus: Exodeoxyribonuclease 7 small subunit (86 aa).

The protein belongs to the XseB family. In terms of assembly, heterooligomer composed of large and small subunits.

It localises to the cytoplasm. It catalyses the reaction Exonucleolytic cleavage in either 5'- to 3'- or 3'- to 5'-direction to yield nucleoside 5'-phosphates.. Bidirectionally degrades single-stranded DNA into large acid-insoluble oligonucleotides, which are then degraded further into small acid-soluble oligonucleotides. This is Exodeoxyribonuclease 7 small subunit from Agrobacterium fabrum (strain C58 / ATCC 33970) (Agrobacterium tumefaciens (strain C58)).